The following is a 533-amino-acid chain: Capsid protein VP1 (533 aa).

The disordered stretch occupies residues T333–Q353.

This sequence belongs to the microviridae F protein family.

Its subcellular location is the virion. The protein localises to the host cytoplasm. Functionally, assembles to form an icosahedral capsid with a T=1 symmetry. This is Capsid protein VP1 from Bdellovibrio bacteriovorus (Bacteriophage phiMH2K).